The chain runs to 195 residues: Protein A43 (195 aa).

A signal peptide spans 1–21; it reads MMIKWIISILTMSIMPVLVYS. Residues 23 to 166 lie on the Extracellular side of the membrane; sequence SIFRFRSEDV…YKDINDKYND (144 aa). 2 N-linked (GlcNAc...) asparagine; by host glycosylation sites follow: Asn-66 and Asn-115. Residues 167-187 traverse the membrane as a helical segment; it reads IYDFTAICMLIASTLIVTIYV. At 188-195 the chain is on the cytoplasmic side; sequence FKKIKMNS.

Belongs to the orthopoxvirus OPG172 protein family.

Its subcellular location is the host membrane. It localises to the host cell surface. The polypeptide is Protein A43 (OPG172) (Homo sapiens (Human)).